Here is a 138-residue protein sequence, read N- to C-terminus: Cysteine desulfuration protein SufE (138 aa).

Catalysis depends on C51, which acts as the Cysteine persulfide intermediate.

It belongs to the SufE family. As to quaternary structure, homodimer. Interacts with SufS.

Its subcellular location is the cytoplasm. The protein operates within cofactor biosynthesis; iron-sulfur cluster biosynthesis. In terms of biological role, participates in cysteine desulfuration mediated by SufS. Cysteine desulfuration mobilizes sulfur from L-cysteine to yield L-alanine and constitutes an essential step in sulfur metabolism for biosynthesis of a variety of sulfur-containing biomolecules. Functions as a sulfur acceptor for SufS, by mediating the direct transfer of the sulfur atom from the S-sulfanylcysteine of SufS, an intermediate product of cysteine desulfuration process. In Escherichia coli O17:K52:H18 (strain UMN026 / ExPEC), this protein is Cysteine desulfuration protein SufE.